A 90-amino-acid chain; its full sequence is U7-theraphotoxin-Hhn1a 5 (90 aa).

The signal sequence occupies residues 1–19; sequence MKTAIFTVVLALAVFAVLS. Positions 20-50 are excised as a propeptide; the sequence is FGWEANEKALSEESTELIHEKEAASETEARE. 3 disulfide bridges follow: C51/C65, C58/C70, and C64/C81.

It belongs to the neurotoxin 10 (Hwtx-1) family. 13 (Hntx-13) subfamily. Expressed by the venom gland.

Its subcellular location is the secreted. Functionally, ion channel inhibitor. This chain is U7-theraphotoxin-Hhn1a 5, found in Cyriopagopus hainanus (Chinese bird spider).